The following is a 235-amino-acid chain: Small ribosomal subunit protein uS2 (235 aa).

It belongs to the universal ribosomal protein uS2 family.

The sequence is that of Small ribosomal subunit protein uS2 from Caldanaerobacter subterraneus subsp. tengcongensis (strain DSM 15242 / JCM 11007 / NBRC 100824 / MB4) (Thermoanaerobacter tengcongensis).